A 163-amino-acid chain; its full sequence is Transcriptional repressor NrdR (163 aa).

A zinc finger spans residues 3–34 (CPFCRHPDSRVVDSRVSDDGSSIRRRRQCPQC). An ATP-cone domain is found at 46 to 136 (LTVIKRSGIG…VYQAFESLDD (91 aa)).

Belongs to the NrdR family. The cofactor is Zn(2+).

Its function is as follows. Negatively regulates transcription of bacterial ribonucleotide reductase nrd genes and operons by binding to NrdR-boxes. The polypeptide is Transcriptional repressor NrdR (Renibacterium salmoninarum (strain ATCC 33209 / DSM 20767 / JCM 11484 / NBRC 15589 / NCIMB 2235)).